A 367-amino-acid chain; its full sequence is UDP-N-acetylglucosamine--N-acetylmuramyl-(pentapeptide) pyrophosphoryl-undecaprenol N-acetylglucosamine transferase (367 aa).

UDP-N-acetyl-alpha-D-glucosamine contacts are provided by residues 13 to 15, asparagine 125, arginine 165, serine 192, and glutamine 293; that span reads TGG.

Belongs to the glycosyltransferase 28 family. MurG subfamily.

It localises to the cell inner membrane. It catalyses the reaction di-trans,octa-cis-undecaprenyl diphospho-N-acetyl-alpha-D-muramoyl-L-alanyl-D-glutamyl-meso-2,6-diaminopimeloyl-D-alanyl-D-alanine + UDP-N-acetyl-alpha-D-glucosamine = di-trans,octa-cis-undecaprenyl diphospho-[N-acetyl-alpha-D-glucosaminyl-(1-&gt;4)]-N-acetyl-alpha-D-muramoyl-L-alanyl-D-glutamyl-meso-2,6-diaminopimeloyl-D-alanyl-D-alanine + UDP + H(+). Its pathway is cell wall biogenesis; peptidoglycan biosynthesis. Cell wall formation. Catalyzes the transfer of a GlcNAc subunit on undecaprenyl-pyrophosphoryl-MurNAc-pentapeptide (lipid intermediate I) to form undecaprenyl-pyrophosphoryl-MurNAc-(pentapeptide)GlcNAc (lipid intermediate II). The protein is UDP-N-acetylglucosamine--N-acetylmuramyl-(pentapeptide) pyrophosphoryl-undecaprenol N-acetylglucosamine transferase of Jannaschia sp. (strain CCS1).